Here is a 130-residue protein sequence, read N- to C-terminus: Large ribosomal subunit protein bL17 (130 aa).

Belongs to the bacterial ribosomal protein bL17 family. As to quaternary structure, part of the 50S ribosomal subunit. Contacts protein L32.

In Delftia acidovorans (strain DSM 14801 / SPH-1), this protein is Large ribosomal subunit protein bL17.